The following is a 479-amino-acid chain: MKHPAYTLLLSLIMSMCAGSKGLAEQLTKENLTVSLLPPNFHKENTVTNDWIPEGEEDDDYLDLEKLLSEDDDYIYVVDAVSPTDSESSAGNILQLFQGKSRIQRLNILNAKFAFNLYRVLKDQATSSDNIFIAPVGISTAMGMISLGLRGETHEEVHSVLHFKDFVNASSKYEVTTIHNLFRKLTHRLFRRNFGYTLQSVNDLYIQKQFPIREDFKAAMREFYFAEAQEADFSDPAFISKANSHILKLTKGLIKEALENTDSATQMMILNCIYFKGAWMNKFPVEMTHNHNFRLNEREVVKVSMMQTKGNFLAANDQELDCDILQLEYVGGISMLIVIPRKLSGMKTLEAQLTPQVVERWQKSMTNRTREVLLPKFKLEKNYNLVEVLKSMGITKLFNKNGNMSGISDQRIIIDLFKHQSTITVNEEGTQAAAVTTVGFMPLSTQVRFTVDRPFLFLVYEHRTSCLLFMGRVANPAKS.

Residues 1 to 23 form the signal peptide; it reads MKHPAYTLLLSLIMSMCAGSKGL. Residue N31 is glycosylated (N-linked (GlcNAc...) asparagine). 2 repeat units span residues 55–65 and 69–79. Residues 55-79 form a 2 X 11 AA approximate repeats, Asp/Glu-rich (acidic) (hirudin-like) region; that stretch reads GEEDDDYLDLEKLLSEDDDYIYVVD. Y61 and Y74 each carry sulfotyrosine. The N-linked (GlcNAc...) asparagine glycan is linked to N168. The segment at 172–192 is glycosaminoglycan-binding site; sequence KYEVTTIHNLFRKLTHRLFRR. 2 N-linked (GlcNAc...) asparagine glycosylation sites follow: N367 and N403.

This sequence belongs to the serpin family. Post-translationally, different composition of the N-linked oligosaccharides appears to yield a 68-kDa and a 72-kDa form.

Thrombin inhibitor activated by the glycosaminoglycans, heparin or dermatan sulfate. In the presence of the latter, HC-II becomes the predominant thrombin inhibitor in place of antithrombin III (AT). In Rattus norvegicus (Rat), this protein is Heparin cofactor 2 (Serpind1).